Reading from the N-terminus, the 414-residue chain is ZP domain-containing protein (414 aa).

Positions 1–17 (MFLYSFVFLMLLGLSSA) are cleaved as a signal peptide. The interval 18-65 (QTESATSPDEVETEPTMSTDQPETSPSMSTETEPTTETPPVTTPPPPD) is disordered. Residues 18-364 (QTESATSPDE…GAQEAVSSLT (347 aa)) lie on the Extracellular side of the membrane. Low complexity predominate over residues 39-57 (PETSPSMSTETEPTTETPP). The region spanning 70–323 (ICTNEKMEVF…SRCAKGCETS (254 aa)) is the ZP domain. Cysteine 241 and cysteine 302 are joined by a disulfide. A helical transmembrane segment spans residues 365–385 (IFAAVAGVLGVIVLFLAVALV). Residues 386–414 (MLYKRYRSPQSATRVVYTKTANEEGKLLV) are Cytoplasmic-facing.

In terms of tissue distribution, component of the acid-insoluble and acid-soluble organic matrix of the aragonitic skeleton (at protein level).

The protein localises to the membrane. The chain is ZP domain-containing protein from Acropora millepora (Staghorn coral).